A 298-amino-acid chain; its full sequence is MNMANLKAVIPVAGLGMHMLPATKAIPKEMLPIVDKPMIQYIVDEIVAAGIKEIVLVTHSSKNAVENHFDTSYELEALLEQRVKRQLLAEVQAICPPGVTIMNVRQAQPLGLGHSILCARPVVGDNPFVVVLPDIILDGGTADPLRYNLAAMIARFNETGRSQVLAKRMPGDLSEYSVIQTKEPMVAEGQVARIVEFIEKPDEPQTLDSDLMAVGRYVLSADIWAELERTEPGAWGRIQLTDAIAELAKKQSVDAMLMTGESYDCGKKMGYMQAFVTYGMRNLKEGAKFRESIKKLLA.

Belongs to the UDPGP type 2 family.

It catalyses the reaction alpha-D-glucose 1-phosphate + UTP + H(+) = UDP-alpha-D-glucose + diphosphate. The protein operates within carbohydrate metabolism; nucleotide-sugar metabolism. It participates in capsule biogenesis; capsule polysaccharide biosynthesis. In Klebsiella pneumoniae, this protein is UTP--glucose-1-phosphate uridylyltransferase (galF).